Here is a 166-residue protein sequence, read N- to C-terminus: Phosphopantetheine adenylyltransferase (166 aa).

Ser-10 contributes to the substrate binding site. ATP contacts are provided by residues 10-11 and His-18; that span reads SF. Substrate is bound by residues Lys-42, Ala-79, and Arg-93. ATP-binding positions include 94–96, Glu-104, and 129–135; these read GLR and VRPITAT.

It belongs to the bacterial CoaD family. As to quaternary structure, homohexamer. It depends on Mg(2+) as a cofactor.

The protein localises to the cytoplasm. The enzyme catalyses (R)-4'-phosphopantetheine + ATP + H(+) = 3'-dephospho-CoA + diphosphate. It participates in cofactor biosynthesis; coenzyme A biosynthesis; CoA from (R)-pantothenate: step 4/5. Its function is as follows. Reversibly transfers an adenylyl group from ATP to 4'-phosphopantetheine, yielding dephospho-CoA (dPCoA) and pyrophosphate. The sequence is that of Phosphopantetheine adenylyltransferase from Methylobacterium nodulans (strain LMG 21967 / CNCM I-2342 / ORS 2060).